The chain runs to 238 residues: ATP synthase subunit a (238 aa).

Helical transmembrane passes span 15 to 35 (IFNL…FVFI), 76 to 96 (YSLF…LGLM), 111 to 131 (PTAN…LTHI), 167 to 187 (LALR…LLLL), and 208 to 230 (AFSV…VYLG).

It belongs to the ATPase A chain family. F-type ATPases have 2 components, CF(1) - the catalytic core - and CF(0) - the membrane proton channel. CF(1) has five subunits: alpha(3), beta(3), gamma(1), delta(1), epsilon(1). CF(0) has three main subunits: a(1), b(2) and c(9-12). The alpha and beta chains form an alternating ring which encloses part of the gamma chain. CF(1) is attached to CF(0) by a central stalk formed by the gamma and epsilon chains, while a peripheral stalk is formed by the delta and b chains.

Its subcellular location is the cell membrane. In terms of biological role, key component of the proton channel; it plays a direct role in the translocation of protons across the membrane. The chain is ATP synthase subunit a from Streptococcus pneumoniae (strain 70585).